Here is a 548-residue protein sequence, read N- to C-terminus: Medium/long-chain-fatty-acid--CoA/3-oxocholest-4-en-26-oate--CoA ligase (548 aa).

ATP is bound by residues 174-182 (TGGTTGFPK), Asp415, Arg430, and Lys521. Basic and acidic residues predominate over residues 520–541 (GKPDYRWAKEQTEARPADDVHA). The segment at 520–548 (GKPDYRWAKEQTEARPADDVHAGHVTSGG) is disordered.

Belongs to the ATP-dependent AMP-binding enzyme family.

The catalysed reaction is a medium-chain fatty acid + ATP + CoA = a medium-chain fatty acyl-CoA + AMP + diphosphate. It carries out the reaction a long-chain fatty acid + ATP + CoA = a long-chain fatty acyl-CoA + AMP + diphosphate. It catalyses the reaction (25S)-3-oxocholest-4-en-26-oate + ATP + CoA = (25S)-3-oxocholest-4-en-26-oyl-CoA + AMP + diphosphate. It functions in the pathway lipid metabolism; fatty acid biosynthesis. It participates in steroid metabolism; cholesterol metabolism. Catalyzes the activation of medium/long-chain fatty acids as acyl-coenzyme A (acyl-CoA), which are then transferred to the multifunctional polyketide synthase (PKS) type III for further chain extension. Also involved in the degradation of cholesterol via the degradation of the side chains of C-24 branched-chain sterols. Catalyzes the ATP-dependent CoA thioesterification of the sterol 3-oxocholest-4-en-26-oate to yield 3-oxocholest-4-en-26-oyl-CoA. The sequence is that of Medium/long-chain-fatty-acid--CoA/3-oxocholest-4-en-26-oate--CoA ligase from Mycobacterium bovis (strain ATCC BAA-935 / AF2122/97).